Consider the following 365-residue polypeptide: Chorismate synthase (365 aa).

An NADP(+)-binding site is contributed by R47. FMN-binding positions include R124–S126, G287, K302–T306, and R328.

The protein belongs to the chorismate synthase family. Homotetramer. FMNH2 is required as a cofactor.

It carries out the reaction 5-O-(1-carboxyvinyl)-3-phosphoshikimate = chorismate + phosphate. It participates in metabolic intermediate biosynthesis; chorismate biosynthesis; chorismate from D-erythrose 4-phosphate and phosphoenolpyruvate: step 7/7. In terms of biological role, catalyzes the anti-1,4-elimination of the C-3 phosphate and the C-6 proR hydrogen from 5-enolpyruvylshikimate-3-phosphate (EPSP) to yield chorismate, which is the branch point compound that serves as the starting substrate for the three terminal pathways of aromatic amino acid biosynthesis. This reaction introduces a second double bond into the aromatic ring system. This chain is Chorismate synthase, found in Prochlorococcus marinus (strain AS9601).